A 66-amino-acid polypeptide reads, in one-letter code: Large ribosomal subunit protein bL33c (66 aa).

It belongs to the bacterial ribosomal protein bL33 family.

The protein localises to the plastid. Its subcellular location is the chloroplast. This chain is Large ribosomal subunit protein bL33c, found in Angiopteris evecta (Mule's foot fern).